The sequence spans 340 residues: GTP 3',8-cyclase (340 aa).

The Radical SAM core domain maps to 8-227 (KLGRPIRDLR…TMIEQHFEID (220 aa)). GTP is bound at residue arginine 17. Residues cysteine 24 and cysteine 28 each contribute to the [4Fe-4S] cluster site. Residue tyrosine 30 coordinates S-adenosyl-L-methionine. Cysteine 31 provides a ligand contact to [4Fe-4S] cluster. Arginine 71 is a GTP binding site. S-adenosyl-L-methionine is bound at residue glycine 75. A GTP-binding site is contributed by threonine 102. Serine 126 contacts S-adenosyl-L-methionine. Residue lysine 163 coordinates GTP. Methionine 197 lines the S-adenosyl-L-methionine pocket. 2 residues coordinate [4Fe-4S] cluster: cysteine 261 and cysteine 264. A GTP-binding site is contributed by 266–268 (RAR). Residue cysteine 278 participates in [4Fe-4S] cluster binding.

This sequence belongs to the radical SAM superfamily. MoaA family. As to quaternary structure, monomer and homodimer. It depends on [4Fe-4S] cluster as a cofactor.

The catalysed reaction is GTP + AH2 + S-adenosyl-L-methionine = (8S)-3',8-cyclo-7,8-dihydroguanosine 5'-triphosphate + 5'-deoxyadenosine + L-methionine + A + H(+). Its pathway is cofactor biosynthesis; molybdopterin biosynthesis. Functionally, catalyzes the cyclization of GTP to (8S)-3',8-cyclo-7,8-dihydroguanosine 5'-triphosphate. The sequence is that of GTP 3',8-cyclase from Staphylococcus aureus (strain USA300).